The sequence spans 360 residues: Autoinducer 2 import system permease protein LsrC (360 aa).

9 helical membrane-spanning segments follow: residues 18–38 (TALL…RNYF), 45–65 (MIFS…MVML), 76–96 (ITGL…GLAL), 99–119 (LFAL…VTWL), 121–141 (IPAI…MLLL), 161–181 (ILFS…AMAL), 219–239 (MNGV…GFIP), 255–275 (VLGG…ILGA), and 290–310 (LPAW…LVFD). Residues 334 to 360 (VAPDKKVKSNNNKAPSSKSFTKKEVVR) are disordered. A compositionally biased stretch (low complexity) spans 342–352 (SNNNKAPSSKS).

This sequence belongs to the binding-protein-dependent transport system permease family. AraH/RbsC subfamily. As to quaternary structure, the complex is composed of two ATP-binding proteins (LsrA), two transmembrane proteins (LsrC and LsrD) and a solute-binding protein (LsrB).

The protein localises to the cell inner membrane. Functionally, part of the ABC transporter complex LsrABCD involved in autoinducer 2 (AI-2) import. Probably responsible for the translocation of the substrate across the membrane. The polypeptide is Autoinducer 2 import system permease protein LsrC (lsrC) (Yersinia enterocolitica serotype O:8 / biotype 1B (strain NCTC 13174 / 8081)).